The chain runs to 297 residues: Flavin-dependent thymidylate synthase (297 aa).

Residues 41–251 enclose the ThyX domain; it reads GFVRLVDYMG…PLTYAAFVEY (211 aa). FAD-binding positions include Thr-87, 110–112, and Glu-118; that span reads RHR. DUMP-binding positions include 107-110, 118-122, and Arg-190; these read QWVR and EYSAR. Positions 110–120 match the ThyX motif motif; it reads RHRTANVNEYS. FAD is bound by residues 206–208 and His-212; that span reads DLH. DUMP is bound at residue Arg-217. The Involved in ionization of N3 of dUMP, leading to its activation role is filled by Arg-217.

This sequence belongs to the thymidylate synthase ThyX family. In terms of assembly, homotetramer. Requires FAD as cofactor.

It carries out the reaction dUMP + (6R)-5,10-methylene-5,6,7,8-tetrahydrofolate + NADPH + H(+) = dTMP + (6S)-5,6,7,8-tetrahydrofolate + NADP(+). It functions in the pathway pyrimidine metabolism; dTTP biosynthesis. Functionally, catalyzes the reductive methylation of 2'-deoxyuridine-5'-monophosphate (dUMP) to 2'-deoxythymidine-5'-monophosphate (dTMP) while utilizing 5,10-methylenetetrahydrofolate (mTHF) as the methyl donor, and NADPH and FADH(2) as the reductant. This chain is Flavin-dependent thymidylate synthase, found in Ehrlichia ruminantium (strain Gardel).